The chain runs to 489 residues: Dentin matrix acidic phosphoprotein 1 (489 aa).

An N-terminal signal peptide occupies residues 1–16 (MKTVILLTFLWGLSCA). Positions 22–489 (YQNTESESSE…QDDNDCQDGY (468 aa)) are disordered. Residues 82 to 100 (DKEEDEDDSGDDTFGDEDN) show a composition bias toward acidic residues. Over residues 123 to 138 (DTTQSSEDSTSQENSA) the composition is skewed to low complexity. Basic and acidic residues-rich tracts occupy residues 143–159 (SDSK…RPEA) and 217–227 (RSEESKGDHEP). The span at 263 to 274 (DSNSRETQSVST) shows a compositional bias: polar residues. A compositionally biased stretch (basic and acidic residues) spans 275–287 (EDFRSKEESRSET). The segment covering 316-332 (EPSQESSSESQEGVASE) has biased composition (low complexity). The Cell attachment site motif lies at 334–336 (RGD). Asparagine 340 carries an N-linked (GlcNAc...) asparagine glycan. Positions 346 to 358 (DQRDSESSEEDRL) are enriched in basic and acidic residues. Asparagine 378 carries an N-linked (GlcNAc...) asparagine glycan. Residues 386–397 (ESQESAQDEDSS) are compositionally biased toward acidic residues. Low complexity predominate over residues 398-419 (SQEGLQSQSASRESRSQESQSE). Over residues 420-442 (QDSRSEENRDSDSQDSSRSKEES) the composition is skewed to basic and acidic residues. N-linked (GlcNAc...) asparagine glycosylation occurs at asparagine 443. A compositionally biased stretch (basic and acidic residues) spans 453-478 (EDNHPKNIEADNRKLIVDAYHNKPIG). Over residues 479–489 (DQDDNDCQDGY) the composition is skewed to acidic residues.

Interacts with importin alpha. Post-translationally, phosphorylated in the cytosol and extracellular matrix and unphosphorylated in the nucleus. Phosphorylation is necessary for nucleocytoplasmic transport and may be catalyzed by a nuclear isoform of CK2 and can be augmented by calcium. Phosphorylated (in vitro) by FAM20C in the extracellular medium at sites within the S-x-E/pS motif. As to expression, expressed in tooth particularly in odontoblast and ameloblast.

Its subcellular location is the nucleus. The protein localises to the cytoplasm. The protein resides in the secreted. It localises to the extracellular space. It is found in the extracellular matrix. Its function is as follows. May have a dual function during osteoblast differentiation. In the nucleus of undifferentiated osteoblasts, unphosphorylated form acts as a transcriptional component for activation of osteoblast-specific genes like osteocalcin. During the osteoblast to osteocyte transition phase it is phosphorylated and exported into the extracellular matrix, where it regulates nucleation of hydroxyapatite. The chain is Dentin matrix acidic phosphoprotein 1 (Dmp1) from Rattus norvegicus (Rat).